The following is a 215-amino-acid chain: Nucleoredoxin-like protein 1 (215 aa).

Residues 1 to 164 (MVDLFLGKVL…GAELIDRNFM (164 aa)) form the Thioredoxin; atypical domain. The disordered stretch occupies residues 190–215 (DEKKKKKKRDDDDDDDDGGGGGGPWG).

The protein belongs to the nucleoredoxin family.

It is found in the cell projection. The protein localises to the cilium. It localises to the photoreceptor outer segment. Functionally, plays an important role in retinal cone photoreceptor survival. May play a role in cone cell viability, slowing down cone degeneration, does not seem to play a role in degenerating rods. In Danio rerio (Zebrafish), this protein is Nucleoredoxin-like protein 1 (nxnl1).